A 746-amino-acid polypeptide reads, in one-letter code: Polyribonucleotide nucleotidyltransferase (746 aa).

2 residues coordinate Mg(2+): aspartate 490 and aspartate 496. The 63-residue stretch at 557–619 (PRIETMIIGK…ATIDAAVKAI (63 aa)) folds into the KH domain. An S1 motif domain is found at 629 to 699 (GEVYEGKISS…KTGKFKLSRK (71 aa)). Residues 701 to 746 (LLPKPEGYEERPPRPERGERGPRQDRGDRGPRQDRGDRGPRREYRD) are disordered. A compositionally biased stretch (basic and acidic residues) spans 706-746 (EGYEERPPRPERGERGPRQDRGDRGPRQDRGDRGPRREYRD).

It belongs to the polyribonucleotide nucleotidyltransferase family. The cofactor is Mg(2+).

Its subcellular location is the cytoplasm. The enzyme catalyses RNA(n+1) + phosphate = RNA(n) + a ribonucleoside 5'-diphosphate. Involved in mRNA degradation. Catalyzes the phosphorolysis of single-stranded polyribonucleotides processively in the 3'- to 5'-direction. The chain is Polyribonucleotide nucleotidyltransferase from Parabacteroides distasonis (strain ATCC 8503 / DSM 20701 / CIP 104284 / JCM 5825 / NCTC 11152).